The following is a 466-amino-acid chain: Uridine kinase-like protein 3 (466 aa).

The interval 41–246 (HGQPFVIGVA…IVQHIHTKLG (206 aa)) is uridine kinase. Residues 256–466 (NLYVIQSTFQ…GDRYFGTDDE (211 aa)) are uracil phosphoribosyltransferase. Residues lysine 280, arginine 289, and 323-326 (CKKL) contribute to the GTP site. The 5-phospho-alpha-D-ribose 1-diphosphate site is built by arginine 333 and arginine 358. Arginine 378 serves as a coordination point for GTP. 5-phospho-alpha-D-ribose 1-diphosphate contacts are provided by residues aspartate 384, 389–392 (TGNS), and glutamate 455. A uracil-binding site is contributed by 454–456 (GEF).

The protein in the N-terminal section; belongs to the uridine kinase family. It in the C-terminal section; belongs to the UPRTase family. Requires Mg(2+) as cofactor.

It catalyses the reaction UMP + diphosphate = 5-phospho-alpha-D-ribose 1-diphosphate + uracil. The enzyme catalyses cytidine + ATP = CMP + ADP + H(+). The catalysed reaction is uridine + ATP = UMP + ADP + H(+). It functions in the pathway pyrimidine metabolism; UMP biosynthesis via salvage pathway; UMP from uracil: step 1/1. The protein operates within pyrimidine metabolism; CTP biosynthesis via salvage pathway; CTP from cytidine: step 1/3. It participates in pyrimidine metabolism; UMP biosynthesis via salvage pathway; UMP from uridine: step 1/1. With respect to regulation, allosterically activated by GTP. Involved in the pyrimidine salvage pathway. The uracil phosphoribosyltransferase (UPRT) activity, that catalyzes the conversion of uracil and 5-phospho-alpha-D-ribose 1-diphosphate (PRPP) to UMP and diphosphate, is unsure. This chain is Uridine kinase-like protein 3 (UKL3), found in Arabidopsis thaliana (Mouse-ear cress).